The chain runs to 587 residues: Arginine--tRNA ligase (587 aa).

The 'HIGH' region motif lies at 127-137 (PNLAKEMHVGH).

The protein belongs to the class-I aminoacyl-tRNA synthetase family. As to quaternary structure, monomer.

It is found in the cytoplasm. The enzyme catalyses tRNA(Arg) + L-arginine + ATP = L-arginyl-tRNA(Arg) + AMP + diphosphate. This is Arginine--tRNA ligase from Pseudomonas aeruginosa (strain LESB58).